A 308-amino-acid polypeptide reads, in one-letter code: MQEKISKFEDFLTQLQQNITTALEQHETNAAKFISDKWQKPDTPDQKLKGYGNSMIIEGGEIFEKGVVAFSRVHGSELPPSATAKRQELAGKSFIATGLSLVIHPRNPFVPTSHANFRIFIAGADTDNPIWWFGGGFDLTPYYPFEEDAIHWHQTAKNICDKHDKTYYPKFKKWCDEYFYLKHRNEYRGVGGLFFDDLNDKSFDECFNFVTDCANSYLDAYIPIVAQRKNIEYSQKHKDFQLYRRGRYVEFNLVFDRGTIFGLQSGGRTESILSSMPPMATWKYNWQPELGSEEEKVYQYIKPRDWIK.

Residue S100 coordinates substrate. A divalent metal cation contacts are provided by H104 and H114. Catalysis depends on H114, which acts as the Proton donor. A substrate-binding site is contributed by 116 to 118 (NFR). 2 residues coordinate a divalent metal cation: H153 and H183. The important for dimerization stretch occupies residues 248–283 (YVEFNLVFDRGTIFGLQSGGRTESILSSMPPMATWK). Position 266-268 (266-268 (GGR)) interacts with substrate.

This sequence belongs to the aerobic coproporphyrinogen-III oxidase family. In terms of assembly, homodimer. The cofactor is a divalent metal cation.

It is found in the cytoplasm. It carries out the reaction coproporphyrinogen III + O2 + 2 H(+) = protoporphyrinogen IX + 2 CO2 + 2 H2O. The protein operates within porphyrin-containing compound metabolism; protoporphyrin-IX biosynthesis; protoporphyrinogen-IX from coproporphyrinogen-III (O2 route): step 1/1. In terms of biological role, involved in the heme biosynthesis. Catalyzes the aerobic oxidative decarboxylation of propionate groups of rings A and B of coproporphyrinogen-III to yield the vinyl groups in protoporphyrinogen-IX. The chain is Oxygen-dependent coproporphyrinogen-III oxidase from Francisella tularensis subsp. holarctica (strain OSU18).